A 398-amino-acid chain; its full sequence is Bombesin receptor subtype-3 (398 aa).

Residues 1–40 (MAQRQPHSPNQTLISITNDTESSSVVSNDNTNKGRSGDNS) lie on the Extracellular side of the membrane. 2 N-linked (GlcNAc...) asparagine glycosylation sites follow: asparagine 10 and asparagine 18. The chain crosses the membrane as a helical span at residues 41-62 (PGIEALCAIYITYAVIISVGIL). At 63-81 (GNAILIKVFFKTKSMQTVP) the chain is on the cytoplasmic side. The helical transmembrane segment at 82–102 (NIFITSLAFGDLLLLLTCVPV) threads the bilayer. At 103–120 (DATHYLAEGWLFGRIGCK) the chain is on the extracellular side. Cysteine 119 and cysteine 202 are disulfide-bonded. A helical transmembrane segment spans residues 121 to 142 (VLSFIRLTSVGVSVFTLTILSA). At 143–162 (DRYKAVVKPLERQPSNAILK) the chain is on the cytoplasmic side. A helical membrane pass occupies residues 163 to 183 (TCIKAGCVWIVSMIFALPEAI). At 184–219 (FSNVYSFRDPNKNVTFESCTSYPVSKKLLQEIHSLL) the chain is on the extracellular side. The helical transmembrane segment at 220–240 (CFLVFYIIPLSIISVYYSLIA) threads the bilayer. Topologically, residues 241-271 (RTLYKSTLNIPTEEQGHARKQIESRKRIART) are cytoplasmic. Residues 272-292 (VLVLVALFALCWLPNHLLYLY) traverse the membrane as a helical segment. The Extracellular portion of the chain corresponds to 293–312 (HSFTSQTYVDPSAMHFIFTI). Residues 313-332 (FSRVLAFSNSCVNPFALYWL) traverse the membrane as a helical segment. At 333–398 (SKTFQKHFKA…CSVKQAEDRV (66 aa)) the chain is on the cytoplasmic side. Cysteine 346 is lipidated: S-palmitoyl cysteine.

Belongs to the G-protein coupled receptor 1 family. In terms of assembly, interacts with C6orf89.

It localises to the cell membrane. Its function is as follows. Role in sperm cell division, maturation, or function. This receptor mediates its action by association with G proteins that activate a phosphatidylinositol-calcium second messenger system. The chain is Bombesin receptor subtype-3 (BRS3) from Macaca mulatta (Rhesus macaque).